The following is a 1121-amino-acid chain: Phytochrome 2 (1121 aa).

The 180-residue stretch at 214–393 (DIGLLCDTVV…VFGMQLNMEV (180 aa)) folds into the GAF domain. Cysteine 319 contributes to the phytochromobilin binding site. 2 consecutive PAS domains span residues 608-679 (VANE…SQGE) and 742-813 (DYKT…TKFM). The Histidine kinase domain maps to 893–1113 (YIRQEIKNPL…VVYVELPMAQ (221 aa)).

It belongs to the phytochrome family. In terms of assembly, homodimer. Post-translationally, contains one covalently linked phytochromobilin chromophore.

In terms of biological role, regulatory photoreceptor which exists in two forms that are reversibly interconvertible by light: the Pr form that absorbs maximally in the red region of the spectrum and the Pfr form that absorbs maximally in the far-red region. Photoconversion of Pr to Pfr induces an array of morphogenic responses, whereas reconversion of Pfr to Pr cancels the induction of those responses. Pfr controls the expression of a number of nuclear genes including those encoding the small subunit of ribulose-bisphosphate carboxylase, chlorophyll A/B binding protein, protochlorophyllide reductase, rRNA, etc. It also controls the expression of its own gene(s) in a negative feedback fashion. In Ceratodon purpureus (Fire moss), this protein is Phytochrome 2 (PHY2).